Consider the following 257-residue polypeptide: Cytosolic Fe-S cluster assembly factor NUBP2 homolog (257 aa).

ATP is bound at residue 14–21 (GKGGVGKS). [4Fe-4S] cluster-binding residues include C188 and C191.

The protein belongs to the Mrp/NBP35 ATP-binding proteins family. NUBP2/CFD1 subfamily. Heterotetramer of 2 NUBP1 and 2 NUBP2 chains. [4Fe-4S] cluster is required as a cofactor.

It is found in the cytoplasm. Its function is as follows. Component of the cytosolic iron-sulfur (Fe/S) protein assembly (CIA) machinery. Required for maturation of extramitochondrial Fe-S proteins. The NUBP1-NUBP2 heterotetramer forms a Fe-S scaffold complex, mediating the de novo assembly of an Fe-S cluster and its transfer to target apoproteins. The protein is Cytosolic Fe-S cluster assembly factor NUBP2 homolog of Culex quinquefasciatus (Southern house mosquito).